The primary structure comprises 275 residues: NH(3)-dependent NAD(+) synthetase (275 aa).

Residue 50 to 57 participates in ATP binding; that stretch reads GISGGVDS. Aspartate 56 contributes to the Mg(2+) binding site. Residue arginine 147 participates in deamido-NAD(+) binding. Threonine 167 contributes to the ATP binding site. Position 172 (glutamate 172) interacts with Mg(2+). The deamido-NAD(+) site is built by lysine 180 and aspartate 187. Residues lysine 196 and threonine 218 each contribute to the ATP site. 267–268 contributes to the deamido-NAD(+) binding site; the sequence is HK.

Belongs to the NAD synthetase family. Homodimer.

It carries out the reaction deamido-NAD(+) + NH4(+) + ATP = AMP + diphosphate + NAD(+) + H(+). It functions in the pathway cofactor biosynthesis; NAD(+) biosynthesis; NAD(+) from deamido-NAD(+) (ammonia route): step 1/1. Catalyzes the ATP-dependent amidation of deamido-NAD to form NAD. Uses ammonia as a nitrogen source. The sequence is that of NH(3)-dependent NAD(+) synthetase from Pseudomonas aeruginosa (strain UCBPP-PA14).